We begin with the raw amino-acid sequence, 2083 residues long: Nonribosomal peptide synthetase sidD (2083 aa).

The adenylation 1 stretch occupies residues T251–R650. One can recognise a Carrier 1 domain in the interval R764–D840. S801 is modified (O-(pantetheine 4'-phosphoryl)serine). Residues E876 to I1146 are condensation 1. Residues L1336 to H1421 are adenylation 2. Positions N1557–E1633 constitute a Carrier 2 domain. S1594 carries the post-translational modification O-(pantetheine 4'-phosphoryl)serine. The interval D1674 to F1946 is condensation 2.

It belongs to the NRP synthetase family.

The protein operates within siderophore biosynthesis. Nonribosomal peptide synthetase; part of the siderophore biosynthetic pathway. Aspergillus fumigatus produces four types of siderophores, low-molecular-mass iron chelators, including excreted fusarinine C (FsC) and triacetylfusarinine C (TAFC) for iron uptake; and intacellular ferricrocin (FC) for hyphal and hydroxyferricrocin (HFC) for conidial iron distribution and storage. TAFC consists of three N(2)-acetyl-N(5)-anhydromevalonyl-N(5)-hydroxyornithine residues cyclically linked by ester bonds; FC is a cyclic hexapeptide with the structure Gly-Ser-Gly-(N(5)-acetyl-N(5)-hydroxyornithine)x3. The biosynthesis of all four siderophores depends on the hydroxylation of ornithine, catalyzed by the monooxygenase sidA. Subsequently, the pathways for biosynthesis of extra- and intracellular siderophores split. For biosynthesis of extracellular siderophores, the transacylase sidF transfers anhydromevalonyl to N(5)-hydroxyornithine. The required anhydromevalonyl-CoA moiety is derived from mevalonate by CoA ligation and dehydration catalyzed by sidI and sidH respectively. The acetylation of N(5)-hydroxyornithine for FC biosynthesis involves the constitutively expressed sidL. FC is hydroxylated to HFC by an as yet uncharacterized enzyme during conidiation. Assembly of fusarinine C (FsC) and FC is catalyzed by two different nonribosomal peptide synthetases (NRPS), sidD and sidC respectively. Subsequently, sidG catalyzes N2-acetylation of FsC for forming TAFC. Both extra- and intracellular siderophores are crucial for growth during iron limitation and virulence. This Aspergillus fumigatus (strain ATCC MYA-4609 / CBS 101355 / FGSC A1100 / Af293) (Neosartorya fumigata) protein is Nonribosomal peptide synthetase sidD.